The following is a 122-amino-acid chain: Large ribosomal subunit protein uL14c (122 aa).

This sequence belongs to the universal ribosomal protein uL14 family. As to quaternary structure, part of the 50S ribosomal subunit.

It localises to the plastid. It is found in the chloroplast. In terms of biological role, binds to 23S rRNA. The protein is Large ribosomal subunit protein uL14c of Cycas taitungensis (Prince sago).